The following is a 242-amino-acid chain: Aspartate/glutamate leucyltransferase (242 aa).

This sequence belongs to the R-transferase family. Bpt subfamily.

Its subcellular location is the cytoplasm. It catalyses the reaction N-terminal L-glutamyl-[protein] + L-leucyl-tRNA(Leu) = N-terminal L-leucyl-L-glutamyl-[protein] + tRNA(Leu) + H(+). The enzyme catalyses N-terminal L-aspartyl-[protein] + L-leucyl-tRNA(Leu) = N-terminal L-leucyl-L-aspartyl-[protein] + tRNA(Leu) + H(+). Its function is as follows. Functions in the N-end rule pathway of protein degradation where it conjugates Leu from its aminoacyl-tRNA to the N-termini of proteins containing an N-terminal aspartate or glutamate. The chain is Aspartate/glutamate leucyltransferase from Alcanivorax borkumensis (strain ATCC 700651 / DSM 11573 / NCIMB 13689 / SK2).